Reading from the N-terminus, the 55-residue chain is MAKQQDVRPIIKLRSTAGTGYTYVTRKNRRNNPDRLVLKKYDPVVRTHVDFREER.

This sequence belongs to the bacterial ribosomal protein bL33 family.

The polypeptide is Large ribosomal subunit protein bL33 (Clavibacter sepedonicus (Clavibacter michiganensis subsp. sepedonicus)).